The primary structure comprises 145 residues: Large ribosomal subunit protein uL11 (145 aa).

Belongs to the universal ribosomal protein uL11 family. Part of the ribosomal stalk of the 50S ribosomal subunit. Interacts with L10 and the large rRNA to form the base of the stalk. L10 forms an elongated spine to which L12 dimers bind in a sequential fashion forming a multimeric L10(L12)X complex. In terms of processing, one or more lysine residues are methylated.

Functionally, forms part of the ribosomal stalk which helps the ribosome interact with GTP-bound translation factors. This chain is Large ribosomal subunit protein uL11, found in Rubrobacter xylanophilus (strain DSM 9941 / JCM 11954 / NBRC 16129 / PRD-1).